We begin with the raw amino-acid sequence, 139 residues long: Large ribosomal subunit protein uL16 (139 aa).

Belongs to the universal ribosomal protein uL16 family. Part of the 50S ribosomal subunit.

Functionally, binds 23S rRNA and is also seen to make contacts with the A and possibly P site tRNAs. This chain is Large ribosomal subunit protein uL16 (rplP), found in Neorickettsia sennetsu (strain ATCC VR-367 / Miyayama) (Ehrlichia sennetsu).